The following is a 335-amino-acid chain: Large ribosomal subunit protein uL10 (335 aa).

The tract at residues 304-335 is disordered; sequence GAAAPVEEAPVEEKKEEKKEEAAPAAGLGMLF. Residues 314–325 are compositionally biased toward basic and acidic residues; that stretch reads VEEKKEEKKEEA.

It belongs to the universal ribosomal protein uL10 family. In terms of assembly, part of the 50S ribosomal subunit. Forms part of the ribosomal stalk which helps the ribosome interact with GTP-bound translation factors. Forms a heptameric L10(L12)2(L12)2(L12)2 complex, where L10 forms an elongated spine to which the L12 dimers bind in a sequential fashion.

Functionally, forms part of the ribosomal stalk, playing a central role in the interaction of the ribosome with GTP-bound translation factors. The protein is Large ribosomal subunit protein uL10 of Methanococcus maripaludis (strain C6 / ATCC BAA-1332).